The sequence spans 899 residues: Core protein VP3 (899 aa).

Residues 1 to 22 (MAEPPDAATPKTSPYLKGDELS) are disordered.

Belongs to the orbivirus VP3 family.

The protein resides in the virion. Functionally, the VP3 protein is one of the five proteins (with VP1, VP4, VP6 and VP7) which form the inner capsid of the virus. The sequence is that of Core protein VP3 (Segment-3) from Antilocapra americana (Pronghorn).